A 256-amino-acid polypeptide reads, in one-letter code: 5'-nucleotidase SurE (256 aa).

4 residues coordinate a divalent metal cation: D8, D9, S39, and N91.

The protein belongs to the SurE nucleotidase family. A divalent metal cation serves as cofactor.

It localises to the cytoplasm. It catalyses the reaction a ribonucleoside 5'-phosphate + H2O = a ribonucleoside + phosphate. Nucleotidase that shows phosphatase activity on nucleoside 5'-monophosphates. The sequence is that of 5'-nucleotidase SurE from Marinobacter nauticus (strain ATCC 700491 / DSM 11845 / VT8) (Marinobacter aquaeolei).